The sequence spans 377 residues: Probable tRNA pseudouridine synthase D (377 aa).

Asp89 functions as the Nucleophile in the catalytic mechanism. A TRUD domain is found at 160-377 (YLPAFIGYQR…ILRGDPRKFT (218 aa)).

The protein belongs to the pseudouridine synthase TruD family.

It catalyses the reaction uridine(13) in tRNA = pseudouridine(13) in tRNA. Could be responsible for synthesis of pseudouridine from uracil-13 in transfer RNAs. The chain is Probable tRNA pseudouridine synthase D from Saccharolobus solfataricus (strain ATCC 35092 / DSM 1617 / JCM 11322 / P2) (Sulfolobus solfataricus).